The chain runs to 490 residues: E3 ubiquitin-protein ligase Hakai (490 aa).

Residues Q34 to E60 are disordered. The RING-type zinc finger occupies C108–S148. Positions C147–H205 are HYB domain. The segment at F163–H189 adopts a C2H2-type zinc-finger fold. A phosphoserine mark is found at S200, S284, and S289. The interval Q254–Q490 is disordered. Composition is skewed to pro residues over residues A341 to P358, A371 to G388, and M398 to H422. Residues N426–P441 are compositionally biased toward polar residues. Pro residues predominate over residues P456–P477.

It belongs to the Hakai family. In terms of assembly, homodimer. Interacts with tyrosine-phosphorylated SRC substrates. Component of the WMM complex, a N6-methyltransferase complex composed of a catalytic subcomplex, named MAC, and of an associated subcomplex, named MACOM. The MAC subcomplex is composed of METTL3 and METTL14. The MACOM subcomplex is composed of WTAP, ZC3H13, CBLL1/HAKAI, VIRMA, and, in some cases of RBM15 (RBM15 or RBM15B). Also a component of a MACOM-like complex, named WTAP complex, composed of WTAP, ZC3H13, CBLL1, VIRMA, RBM15, BCLAF1 and THRAP3. In terms of processing, phosphorylated on tyrosine residues.

The protein resides in the nucleus speckle. Its subcellular location is the nucleus. The protein localises to the nucleoplasm. It localises to the cytoplasm. It catalyses the reaction S-ubiquitinyl-[E2 ubiquitin-conjugating enzyme]-L-cysteine + [acceptor protein]-L-lysine = [E2 ubiquitin-conjugating enzyme]-L-cysteine + N(6)-ubiquitinyl-[acceptor protein]-L-lysine.. It participates in protein modification; protein ubiquitination. In terms of biological role, E3 ubiquitin-protein ligase that mediates ubiquitination of several tyrosine-phosphorylated Src substrates, including CDH1, CTTN and DOK1. Targets CDH1 for endocytosis and degradation. Associated component of the WMM complex, a complex that mediates N6-methyladenosine (m6A) methylation of RNAs, a modification that plays a role in the efficiency of mRNA splicing and RNA processing. Its function in the WMM complex is unknown. The polypeptide is E3 ubiquitin-protein ligase Hakai (Macaca fascicularis (Crab-eating macaque)).